The primary structure comprises 939 residues: Valine--tRNA ligase (939 aa).

Residues 45 to 55 carry the 'HIGH' region motif; the sequence is PNVTGTLHMGH. The 'KMSKS' region motif lies at 549 to 553; it reads KMSKS. Residue Lys-552 participates in ATP binding. Residues 876–939 adopt a coiled-coil conformation; sequence AAETARLRKE…KIRVQLVKLA (64 aa).

This sequence belongs to the class-I aminoacyl-tRNA synthetase family. ValS type 1 subfamily. Monomer.

Its subcellular location is the cytoplasm. It carries out the reaction tRNA(Val) + L-valine + ATP = L-valyl-tRNA(Val) + AMP + diphosphate. Functionally, catalyzes the attachment of valine to tRNA(Val). As ValRS can inadvertently accommodate and process structurally similar amino acids such as threonine, to avoid such errors, it has a 'posttransfer' editing activity that hydrolyzes mischarged Thr-tRNA(Val) in a tRNA-dependent manner. This Chromobacterium violaceum (strain ATCC 12472 / DSM 30191 / JCM 1249 / CCUG 213 / NBRC 12614 / NCIMB 9131 / NCTC 9757 / MK) protein is Valine--tRNA ligase.